We begin with the raw amino-acid sequence, 437 residues long: Sonic hedgehog protein (437 aa).

The first 24 residues, 1-24, serve as a signal peptide directing secretion; the sequence is MLLLLARCFLVILASSLLVCPGLA. Cysteine 25 is lipidated: N-palmitoyl cysteine. A Cardin-Weintraub motif is present at residues 33 to 39; sequence KRRHPKK. 7 residues coordinate Ca(2+): glutamate 90, glutamate 91, aspartate 96, threonine 126, glutamate 127, aspartate 130, and aspartate 132. Zn(2+) is bound by residues histidine 141, aspartate 148, and histidine 183. A lipid anchor (Cholesterol glycine ester) is attached at glycine 198. Residue asparagine 279 is glycosylated (N-linked (GlcNAc...) asparagine).

This sequence belongs to the hedgehog family. Interacts with HHATL/GUP1 which negatively regulates HHAT-mediated palmitoylation of the SHH N-terminus. Interacts with BOC and CDON. Interacts with HHIP. Interacts with DISP1 via its cholesterol anchor. Interacts with SCUBE2. Interacts with glypican GPC3. In terms of assembly, multimer. The C-terminal domain displays an autoproteolysis activity and a cholesterol transferase activity. Both activities result in the cleavage of the full-length protein and covalent attachment of a cholesterol moiety to the C-terminal of the newly generated N-terminal fragment (ShhN). Cholesterylation is required for the sonic hedgehog protein N-product targeting to lipid rafts and multimerization. ShhN is the active species in both local and long-range signaling, whereas the C-product (ShhC) is degraded in the endoplasmic reticulum. In terms of processing, N-palmitoylation by HHAT of ShhN is required for sonic hedgehog protein N-product multimerization and full activity. It is a prerequisite for the membrane-proximal positioning and the subsequent shedding of this N-terminal peptide. Post-translationally, the lipidated N- and C-terminal peptides of ShhNp can be cleaved (shedding). The N-terminal palmitoylated peptide is cleaved at the Cardin-Weintraub (CW) motif site. The cleavage reduced the interactions with heparan sulfate. The cleavage is enhanced by SCUBE2. As to expression, expressed in a number of embryonic tissues including the notochord, ventral neural tube, floor plate, lung bud, zone of polarizing activity and posterior distal mesenchyme of limbs. In the adult, expressed in lung and neural retina.

The protein resides in the endoplasmic reticulum membrane. The protein localises to the golgi apparatus membrane. It is found in the cell membrane. The enzyme catalyses glycyl-L-cysteinyl-[protein] + cholesterol + H(+) = [protein]-C-terminal glycyl cholesterol ester + N-terminal L-cysteinyl-[protein]. Functionally, the C-terminal part of the sonic hedgehog protein precursor displays an autoproteolysis and a cholesterol transferase activity. Both activities result in the cleavage of the full-length protein into two parts (ShhN and ShhC) followed by the covalent attachment of a cholesterol moiety to the C-terminal of the newly generated ShhN. Both activities occur in the reticulum endoplasmic. Once cleaved, ShhC is degraded in the endoplasmic reticulum. The dually lipidated sonic hedgehog protein N-product (ShhNp) is a morphogen which is essential for a variety of patterning events during development. Induces ventral cell fate in the neural tube and somites. Involved in the patterning of the anterior-posterior axis of the developing limb bud. Essential for axon guidance. Binds to the patched (PTCH1) receptor, which functions in association with smoothened (SMO), to activate the transcription of target genes. In the absence of SHH, PTCH1 represses the constitutive signaling activity of SMO. This chain is Sonic hedgehog protein, found in Mus musculus (Mouse).